The sequence spans 276 residues: Large ribosomal subunit protein uL2 (276 aa).

The tract at residues 225–276 (MNPNDHPHGGGEGRNPIGRNPVTPWGKPALGAKTRKKKNPSNRFIVKRRGKK) is disordered. Over residues 257-276 (KTRKKKNPSNRFIVKRRGKK) the composition is skewed to basic residues.

The protein belongs to the universal ribosomal protein uL2 family. Part of the 50S ribosomal subunit. Forms a bridge to the 30S subunit in the 70S ribosome.

Functionally, one of the primary rRNA binding proteins. Required for association of the 30S and 50S subunits to form the 70S ribosome, for tRNA binding and peptide bond formation. It has been suggested to have peptidyltransferase activity; this is somewhat controversial. Makes several contacts with the 16S rRNA in the 70S ribosome. This is Large ribosomal subunit protein uL2 from Desulfitobacterium hafniense (strain DSM 10664 / DCB-2).